The following is a 268-amino-acid chain: Myb-related protein 315 (268 aa).

HTH myb-type domains lie at 9–61 (KFGL…MNYL) and 62–116 (RPDL…KKKL). 2 DNA-binding regions (H-T-H motif) span residues 37-61 (WRVIPKLAGLSRCGKSCRLRWMNYL) and 89-112 (WSKIALHIPGRTDNEIKNYWNTHI).

In terms of tissue distribution, expressed in roots, stems, leaves, seed pods and flowers. Strongest expression in the stem.

The protein resides in the nucleus. Functionally, transcription factor. In Antirrhinum majus (Garden snapdragon), this protein is Myb-related protein 315.